Reading from the N-terminus, the 836-residue chain is Phenylalanine--tRNA ligase beta subunit (836 aa).

In terms of domain architecture, tRNA-binding spans 44–160 (PETTGPLVIG…EIAEPGTDAR (117 aa)). A B5 domain is found at 420-495 (PSMPQIRMKT…RLEGLEDIPT (76 aa)). Residues Asp473, Asp479, Glu482, and Glu483 each contribute to the Mg(2+) site. An FDX-ACB domain is found at 742-835 (SAFPVLHQDL…AAELFGATMR (94 aa)).

This sequence belongs to the phenylalanyl-tRNA synthetase beta subunit family. Type 1 subfamily. Tetramer of two alpha and two beta subunits. Mg(2+) is required as a cofactor.

The protein resides in the cytoplasm. The enzyme catalyses tRNA(Phe) + L-phenylalanine + ATP = L-phenylalanyl-tRNA(Phe) + AMP + diphosphate + H(+). The polypeptide is Phenylalanine--tRNA ligase beta subunit (Corynebacterium diphtheriae (strain ATCC 700971 / NCTC 13129 / Biotype gravis)).